The primary structure comprises 683 residues: Acetyl-coenzyme A synthetase 2 (683 aa).

Residues 207–210 (RGGK) and Thr326 contribute to the CoA site. ATP contacts are provided by residues 402–404 (GEP), 426–431 (DTFWQT), Asp517, and Arg532. Ser540 is a CoA binding site. Position 543 (Arg543) interacts with ATP. Arg613 serves as a coordination point for CoA.

It belongs to the ATP-dependent AMP-binding enzyme family.

The catalysed reaction is acetate + ATP + CoA = acetyl-CoA + AMP + diphosphate. This chain is Acetyl-coenzyme A synthetase 2 (ACS2), found in Candida glabrata (strain ATCC 2001 / BCRC 20586 / JCM 3761 / NBRC 0622 / NRRL Y-65 / CBS 138) (Yeast).